The chain runs to 329 residues: Putative oligopeptide transport ATP-binding protein YkfD (329 aa).

The 246-residue stretch at 7 to 252 (LEVSQLKMHF…PLHPYTKALL (246 aa)) folds into the ABC transporter domain. 44-51 (GESGCGKS) is a binding site for ATP.

It belongs to the ABC transporter superfamily.

This chain is Putative oligopeptide transport ATP-binding protein YkfD (ykfD), found in Bacillus subtilis (strain 168).